The chain runs to 50 residues: MFDLSDSVKNAYLQNIFLLLHCSTLHNDCHDICITIKTRYTMIKNKAITI.

This is an uncharacterized protein from Rickettsia prowazekii (strain Madrid E).